The following is a 504-amino-acid chain: MFS antiporter QDR2 (504 aa).

A compositionally biased stretch (polar residues) spans 1 to 14 (MLSTTQSVTEPTEV). A disordered region spans residues 1–23 (MLSTTQSVTEPTEVTSKKVEDIE). Residues 1–41 (MLSTTQSVTEPTEVTSKKVEDIEKENDEETPYSIFTSYDRL) are Cytoplasmic-facing. A helical membrane pass occupies residues 42–62 (VLIVILSLIGFWSTISSPIYF). Over 63-75 (PALPTLTSYFHTS) the chain is Extracellular. A helical transmembrane segment spans residues 76–96 (SSIMNISVVAYLIFQGIAPTI). The Cytoplasmic segment spans residues 97–106 (SSNLADTFGR). Residues 107–129 (RPVILASIIVFCASCVAISQTNV) traverse the membrane as a helical segment. Residues 130–132 (YWL) are Extracellular-facing. Residues 133 to 155 (LAVLRCIQAAGIAAVISISSGVA) traverse the membrane as a helical segment. Over 156-169 (GDVCTRANRGSMVG) the chain is Cytoplasmic. A helical transmembrane segment spans residues 170–190 (AVAGLQLVGNGIGGLVGAALI). Over 191–198 (SSFNSWRS) the chain is Extracellular. Residues 199-219 (IFIFLTIGGGVTFILAIFILP) traverse the membrane as a helical segment. Topologically, residues 220–278 (ETSRKLVGNGSVVPKNILNKSPYIYLPHFKKRMNNDITTIVPATRFDLLGPLKIFFQKN) are cytoplasmic. The chain crosses the membrane as a helical span at residues 279-299 (VFCTLLPVGIHFAAWTMVLTS). The Extracellular portion of the chain corresponds to 300-311 (LSTELESRYHYS). A helical membrane pass occupies residues 312–332 (VMHVGLIYLPQGIACIAGSLV). Residues 333–370 (VGKSLDWYYRYRKTIYDQEVECLPLDERPQFNIVATRL) are Cytoplasmic-facing. The chain crosses the membrane as a helical span at residues 371 to 391 (TLSVVPALLMIIGLVIFGWCI). Over 392 to 396 (QYKRH) the chain is Extracellular. The helical transmembrane segment at 397–417 (IISIIISTILVSFSASVFIAI) threads the bilayer. The Cytoplasmic portion of the chain corresponds to 418-438 (CTTMLVDLYPNNGSGSTSCLN). A helical membrane pass occupies residues 439–456 (LMRCWLAALGAGVLDSMI). Residues 457–460 (NAMN) are Extracellular-facing. The helical transmembrane segment at 461–483 (VGGTYTVVAGFCILFDLALIYVL) threads the bilayer. Residues 484 to 504 (HNAKKKFSNSGPTTTKSPPKQ) lie on the Cytoplasmic side of the membrane.

Belongs to the major facilitator superfamily. CAR1 family.

It is found in the cell membrane. In terms of biological role, MFS antiporter that does not display functional linkage as drug transporter and performs functions that significantly affect biofilm development and virulence. No substrate for transport has been identified yet, but plays an important role in the growth in the host. This chain is MFS antiporter QDR2 (QDR2), found in Candida albicans (strain SC5314 / ATCC MYA-2876) (Yeast).